The chain runs to 254 residues: Triosephosphate isomerase (254 aa).

Substrate is bound at residue 12–14; the sequence is NWK. His99 acts as the Electrophile in catalysis. The Proton acceptor role is filled by Glu169. Substrate contacts are provided by residues Gly175, Ser214, and 235–236; that span reads GG.

This sequence belongs to the triosephosphate isomerase family. Homodimer.

It localises to the cytoplasm. The catalysed reaction is D-glyceraldehyde 3-phosphate = dihydroxyacetone phosphate. Its pathway is carbohydrate biosynthesis; gluconeogenesis. It participates in carbohydrate degradation; glycolysis; D-glyceraldehyde 3-phosphate from glycerone phosphate: step 1/1. Functionally, involved in the gluconeogenesis. Catalyzes stereospecifically the conversion of dihydroxyacetone phosphate (DHAP) to D-glyceraldehyde-3-phosphate (G3P). This Bartonella tribocorum (strain CIP 105476 / IBS 506) protein is Triosephosphate isomerase.